The primary structure comprises 937 residues: AP-2 complex subunit beta (937 aa).

N-acetylthreonine is present on Thr2. Residue Ser4 is modified to Phosphoserine. Lys265 carries the post-translational modification N6-acetyllysine. Residues 593–617 (LPIHHGSTDAGDSPVGTTTTTNLEQ) are disordered. The segment covering 607 to 617 (VGTTTTTNLEQ) has biased composition (polar residues). Phosphotyrosine occurs at positions 737 and 928.

It belongs to the adaptor complexes large subunit family. Adaptor protein complex 2 (AP-2) is a heterotetramer composed of two large adaptins (alpha-type subunit AP2A1 or AP2A2 and beta-type subunit AP2B1), a medium adaptin (mu-type subunit AP2M1) and a small adaptin (sigma-type subunit AP2S1). Interacts with EPN1. Interacts with EPS15; clathrin competes with EPS15. Interacts with SNAP91; clathrin competes with SNAP91. Interacts with CLTC; clathrin competes with EPS15, SNAP91 and PIP5K1C. Interacts with LDLRAP1. Interacts with AMPH and BIN1. Interacts with ARF6 (GDP-bound). Interacts (dephosphorylated at Tyr-737) with ARRB1; phosphorylation of AP2B1 at Tyr-737 disrupts the interaction. Interacts with SLC2A8. Interacts with SCYL1 and SCYL2. Interacts with TGFBR1 and TGFBR2. Interacts with PIP5K1C; clathrin competes with PIP5K1C. Interacts with DENND1B. Interacts with FCHO1. Interacts with RFTN1. Interacts with KIAA1107. Together with AP2A1 or AP2A2 and AP2M1, it interacts with ADAM10; this interaction facilitates ADAM10 endocytosis from the plasma membrane during long-term potentiation in hippocampal neurons. In terms of tissue distribution, expressed in the brain (at protein level).

The protein localises to the cell membrane. The protein resides in the membrane. It localises to the coated pit. Component of the adaptor protein complex 2 (AP-2). Adaptor protein complexes function in protein transport via transport vesicles in different membrane traffic pathways. Adaptor protein complexes are vesicle coat components and appear to be involved in cargo selection and vesicle formation. AP-2 is involved in clathrin-dependent endocytosis in which cargo proteins are incorporated into vesicles surrounded by clathrin (clathrin-coated vesicles, CCVs) which are destined for fusion with the early endosome. The clathrin lattice serves as a mechanical scaffold but is itself unable to bind directly to membrane components. Clathrin-associated adaptor protein (AP) complexes which can bind directly to both the clathrin lattice and to the lipid and protein components of membranes are considered to be the major clathrin adaptors contributing the CCV formation. AP-2 also serves as a cargo receptor to selectively sort the membrane proteins involved in receptor-mediated endocytosis. AP-2 seems to play a role in the recycling of synaptic vesicle membranes from the presynaptic surface. AP-2 recognizes Y-X-X-[FILMV] (Y-X-X-Phi) and [ED]-X-X-X-L-[LI] endocytosis signal motifs within the cytosolic tails of transmembrane cargo molecules. AP-2 may also play a role in maintaining normal post-endocytic trafficking through the ARF6-regulated, non-clathrin pathway. During long-term potentiation in hippocampal neurons, AP-2 is responsible for the endocytosis of ADAM10. The AP-2 beta subunit acts via its C-terminal appendage domain as a scaffolding platform for endocytic accessory proteins; at least some clathrin-associated sorting proteins (CLASPs) are recognized by their [DE]-X(1,2)-F-X-X-[FL]-X-X-X-R motif. The AP-2 beta subunit binds to clathrin heavy chain, promoting clathrin lattice assembly; clathrin displaces at least some CLASPs from AP2B1 which probably then can be positioned for further coat assembly. The protein is AP-2 complex subunit beta (Ap2b1) of Mus musculus (Mouse).